We begin with the raw amino-acid sequence, 802 residues long: Epithelial sodium channel subunit delta (802 aa).

The Cytoplasmic segment spans residues 1 to 250 (MRAVLSQKTT…CSRGNRLKTT (250 aa)). The segment at 145–211 (KQPHGGALTS…PPPPKEGHQE (67 aa)) is disordered. The span at 166 to 176 (CHLKGWQHRPT) shows a compositional bias: basic residues. Residues 192-205 (PPRPGPPSAPPPPP) are compositionally biased toward pro residues. The helical transmembrane segment at 251–271 (SWGLLSLGALVALCWQLGLLF) threads the bilayer. At 272–694 (ERHWHRPVLM…VPQLLSAMGS (423 aa)) the chain is on the extracellular side. N-linked (GlcNAc...) asparagine glycans are attached at residues Asn-330 and Asn-548. A helical transmembrane segment spans residues 695 to 715 (LCSLWFGASVLSLLELLELLL). Over 716–802 (DASALTLVLG…GPQPLETLDT (87 aa)) the chain is Cytoplasmic. Residues 738–777 (RASPASGASSIKPEASQMPPPAGGTSDDPEPSGPHLPRVM) are disordered.

Belongs to the amiloride-sensitive sodium channel (TC 1.A.6) family. SCNN1D subfamily. In terms of assembly, can form an alternative heterotrimeric epithelial sodium channel (ENaC), composed of a delta (SCNN1D), beta (SCNN1B), and gamma (SCNN1G) subunit, where the delta (SCNN1D) subunit replaces the alpha (SCNN1A) subunit. As to expression, not specifically expressed in epithelial cells.

It is found in the apical cell membrane. It carries out the reaction Na(+)(in) = Na(+)(out). With respect to regulation, originally identified and characterized by its inhibition by the diuretic drug amiloride. Its function is as follows. Potential alternative pore-forming subunit of the epithelial sodium channel (ENaC), capable of replacing the alpha/SCNN1A subunit, creating a more active channel with distinct properties. ENaC functions in epithelial tissues, where it facilitates the electrodiffusion of sodium ions from the extracellular fluid through the apical membrane of cells, with water following osmotically, regulating sodium balance and fluid homeostasis. This subunit could also function independently as a sodium channel or assemble into other tissue-specific heterotrimeric sodium channels. ENaC channels including this isoform exhibit greater conductance. This chain is Epithelial sodium channel subunit delta, found in Homo sapiens (Human).